Reading from the N-terminus, the 332-residue chain is Alpha-N-acetylgalactosaminide alpha-2,6-sialyltransferase 6 (332 aa).

A disordered region spans residues 1–26; sequence MACPRPLSQCDHTPLPGPPAGHWPLP. Residues 1–42 lie on the Cytoplasmic side of the membrane; it reads MACPRPLSQCDHTPLPGPPAGHWPLPLSRRRREMKSNKEQRS. The helical; Signal-anchor for type II membrane protein transmembrane segment at 43–63 threads the bilayer; the sequence is AVFVILFALITILILYSSSSA. Topologically, residues 64–332 are lumenal; the sequence is NEVFHYGSLR…GITFSHPSWT (269 aa). N-linked (GlcNAc...) asparagine glycosylation occurs at asparagine 97. A disulfide bond links cysteine 107 and cysteine 255.

It belongs to the glycosyltransferase 29 family.

Its subcellular location is the golgi apparatus membrane. It carries out the reaction a ganglioside GM1b (d18:1(4E)) + CMP-N-acetyl-beta-neuraminate = a ganglioside GD1alpha (d18:1(4E)) + CMP + H(+). The enzyme catalyses N-acetyl-alpha-neuraminosyl-(2-&gt;3)-beta-D-galactosyl-(1-&gt;3)-N-acetyl-beta-D-glucosaminyl-(1-&gt;3)-beta-D-galactosyl-(1-&gt;4)-beta-D-glucosyl-(1&lt;-&gt;1')-N-acyl-sphing-4-enine + CMP-N-acetyl-beta-neuraminate = N-acetyl-alpha-neuraminosyl-(2-&gt;3)-beta-D-galactosyl-(1-&gt;3)-[N-acetyl-alpha-neuraminosyl-(2-&gt;6)]-N-acetyl-beta-D-glucosaminyl-(1-&gt;3)-beta-D-galactosyl-(1-&gt;4)-beta-D-glucosyl-(1&lt;-&gt;1')-N-acyl-sphing-4-enine + CMP + H(+). The catalysed reaction is a globoside MSGG + CMP-N-acetyl-beta-neuraminate = a globoside DSGG + CMP + H(+). It catalyses the reaction a ganglioside GD1a (d18:1(4E)) + CMP-N-acetyl-beta-neuraminate = a ganglioside GT1aalpha (d18:1(4E)) + CMP + H(+). It carries out the reaction a ganglioside GT1b (d18:1(4E)) + CMP-N-acetyl-beta-neuraminate = a ganglioside GQ1balpha (d18:1(4E)) + CMP + H(+). The enzyme catalyses 3-O-[alpha-Neu5Ac-(2-&gt;3)-beta-D-Gal-(1-&gt;3)-alpha-D-GalNAc]-L-Ser-[protein] + CMP-N-acetyl-beta-neuraminate = a 3-O-{alpha-Neu5Ac-(2-&gt;3)-beta-D-Gal-(1-&gt;3)-[alpha-Neu5Ac-(2-&gt;6)]-alpha-D-GalNAc}-L-seryl-[protein] + CMP + H(+). The catalysed reaction is 3-O-[alpha-Neu5Ac-(2-&gt;3)-beta-D-Gal-(1-&gt;3)-alpha-D-GalNAc]-L-Thr-[protein] + CMP-N-acetyl-beta-neuraminate = a 3-O-{alpha-Neu5Ac-(2-&gt;3)-beta-D-Gal-(1-&gt;3)-[alpha-Neu5Ac-(2-&gt;6)]-alpha-D-GalNAc}-L-threonyl-[protein] + CMP + H(+). In terms of biological role, transfers the sialyl group (N-acetyl-alpha-neuraminyl or NeuAc) from CMP-NeuAc onto glycoproteins and glycolipids, forming an alpha-2,6-linkage. Produces branched type disialyl structures by transfer of a sialyl group onto the GalNAc or GlcNAc residue inside backbone core chains having a terminal sialic acid with an alpha-2,3-linkage on Gal. ST6GalNAcVI prefers glycolipids to glycoproteins, predominantly catalyzing the biosynthesis of ganglioside GD1alpha from GM1b. Besides GMb1, MSGG and other glycolipids, it shows activity towards sialyl Lc4Cer generating disialyl Lc4Cer, which can lead to the synthesis of disialyl Lewis a (Le(a)), suggested to be a cancer-associated antigen. Also has activity toward GD1a and GT1b, and can generate DSGG (disialylgalactosylgloboside) from MSGG (monosialylgalactosylgloboside). This Bos taurus (Bovine) protein is Alpha-N-acetylgalactosaminide alpha-2,6-sialyltransferase 6 (ST6GALNAC6).